Reading from the N-terminus, the 221-residue chain is UPF0758 protein CGSHiEE_07200 (221 aa).

An MPN domain is found at 99–221 (IINDPETVKL…CYSFAENCLL (123 aa)). Zn(2+) is bound by residues histidine 170, histidine 172, and aspartate 183. Positions 170-183 (HNHPSGVTEPSYSD) match the JAMM motif motif.

Belongs to the UPF0758 family.

In Haemophilus influenzae (strain PittEE), this protein is UPF0758 protein CGSHiEE_07200.